Here is a 113-residue protein sequence, read N- to C-terminus: MNTVRVAFLLVFVLAVSLGQADKDENRMEMQEKTEQGKSYLDFAENLLLQKLEEPEAKLLEEDSEESRNSRQKRCIGEGVPCDENDPRCCSGLVCLKPTLHGIWYKSYYCYKK.

An N-terminal signal peptide occupies residues 1-21; it reads MNTVRVAFLLVFVLAVSLGQA. Positions 22–74 are excised as a propeptide; it reads DKDENRMEMQEKTEQGKSYLDFAENLLLQKLEEPEAKLLEEDSEESRNSRQKR. Residues 58 to 69 show a composition bias toward basic and acidic residues; that stretch reads KLLEEDSEESRN. The disordered stretch occupies residues 58–83; the sequence is KLLEEDSEESRNSRQKRCIGEGVPCD. 3 disulfides stabilise this stretch: Cys-75-Cys-90, Cys-82-Cys-95, and Cys-89-Cys-110.

Belongs to the neurotoxin 14 (magi-1) family. 01 (HNTX-16) subfamily. Expressed by the venom gland.

The protein resides in the secreted. In terms of biological role, probable ion channel inhibitor. The chain is U11-theraphotoxin-Hhn1a from Cyriopagopus hainanus (Chinese bird spider).